We begin with the raw amino-acid sequence, 671 residues long: Arginine--tRNA ligase (671 aa).

Residues 124–134 carry the 'HIGH' region motif; sequence PNVAKPMHVGH. Positions 223–254 are disordered; that stretch reads KSDAKTAKEVSDQSESDENLKPKDKKKLRKNA. Over residues 224 to 233 the composition is skewed to basic and acidic residues; the sequence is SDAKTAKEVS.

Belongs to the class-I aminoacyl-tRNA synthetase family. Monomer.

The protein resides in the cytoplasm. The enzyme catalyses tRNA(Arg) + L-arginine + ATP = L-arginyl-tRNA(Arg) + AMP + diphosphate. The chain is Arginine--tRNA ligase from Rhodopirellula baltica (strain DSM 10527 / NCIMB 13988 / SH1).